Reading from the N-terminus, the 470-residue chain is Leucine-rich repeat extensin-like protein 6 (470 aa).

Residues 1-28 form the signal peptide; sequence MREDTFFFQWWFLVSGLSFIFLLPQAFT. N-linked (GlcNAc...) asparagine glycosylation is present at asparagine 83. 10 LRR repeats span residues 98–122, 123–146, 147–170, 171–194, 196–217, 219–241, 243–265, 266–290, 291–314, and 316–337; these read VLTV…LGLL, TDLA…LKCL, HLLH…IFSL, PSLK…LFDL, LDAL…IGNS, VSVL…FYKM, KTLH…EIGL, LNQL…IGDM, KSLE…ICRL, and RLEN…CLRL. Asparagine 319 is a glycosylation site (N-linked (GlcNAc...) asparagine). The segment at 378–411 is disordered; that stretch reads SPPPPPPPPPPPPPPPPPPPPPPPPPPPPPYVYP. The contains the Ser-Pro(4) repeats stretch occupies residues 378–470; it reads SPPPPPPPPP…CNDLPTPVHY (93 aa).

Hydroxylated on proline residues in the S-P-P-P-P repeat. Post-translationally, O-glycosylated on hydroxyprolines. In terms of tissue distribution, expressed in roots.

It localises to the secreted. The protein localises to the cell wall. Modulates cell morphogenesis by regulating cell wall formation and assembly, and/or growth polarization. In Arabidopsis thaliana (Mouse-ear cress), this protein is Leucine-rich repeat extensin-like protein 6 (LRX6).